The primary structure comprises 376 residues: Glutamate 5-kinase (376 aa).

ATP is bound at residue K15. Residues S56, D143, and N155 each contribute to the substrate site. S175–D176 is an ATP binding site. The 78-residue stretch at K281–S358 folds into the PUA domain.

Belongs to the glutamate 5-kinase family.

Its subcellular location is the cytoplasm. The enzyme catalyses L-glutamate + ATP = L-glutamyl 5-phosphate + ADP. It participates in amino-acid biosynthesis; L-proline biosynthesis; L-glutamate 5-semialdehyde from L-glutamate: step 1/2. Functionally, catalyzes the transfer of a phosphate group to glutamate to form L-glutamate 5-phosphate. The sequence is that of Glutamate 5-kinase from Rhodopseudomonas palustris (strain BisB5).